Here is a 917-residue protein sequence, read N- to C-terminus: Probable dipeptidyl-aminopeptidase B (917 aa).

Residues 1–78 form a disordered region; it reads MGVEKRINDE…EGDLEEGFVP (78 aa). At 1–90 the chain is on the cytoplasmic side; the sequence is MGVEKRINDE…GGWSAPRKVS (90 aa). Residues 16–26 are compositionally biased toward basic and acidic residues; that stretch reads AERDDKSRDSI. The segment covering 27–49 has biased composition (low complexity); the sequence is DSTSTASISLALLGGANGSAHGS. A compositionally biased stretch (basic and acidic residues) spans 55–65; the sequence is RKSENQEKYHD. The helical; Signal-anchor for type II membrane protein transmembrane segment at 91-111 threads the bilayer; sequence VIFTLIVTLCIAGWLVAFFVL. At 112–917 the chain is on the vacuolar side; the sequence is LGRHKDSSKD…LGLINILRNG (806 aa). Residues N350 and N465 are each glycosylated (N-linked (GlcNAc...) asparagine). S754 serves as the catalytic Charge relay system. N-linked (GlcNAc...) asparagine glycosylation occurs at N813. Residues D831 and H864 each act as charge relay system in the active site.

This sequence belongs to the peptidase S9B family.

It is found in the vacuole membrane. The catalysed reaction is Release of an N-terminal dipeptide, Xaa-Yaa-|-Zaa-, from a polypeptide, preferentially when Yaa is Pro, provided Zaa is neither Pro nor hydroxyproline.. In terms of biological role, type IV dipeptidyl-peptidase which removes N-terminal dipeptides sequentially from polypeptides having unsubstituted N-termini provided that the penultimate residue is proline. In Coccidioides posadasii (strain C735) (Valley fever fungus), this protein is Probable dipeptidyl-aminopeptidase B (DAPB).